The sequence spans 1006 residues: E3 ubiquitin-protein ligase MIB1 (1006 aa).

The MIB/HERC2 1 domain occupies 6-74 (NNRVMVEGVG…AYDLRILDSA (69 aa)). The segment at 80 to 132 (HDGTMCDTCRQQPIIGIRWKCAECTNYDLCTVCYHGDKHHLRHRFYRITTPGS) adopts a ZZ-type zinc-finger fold. Zn(2+) is bound by residues cysteine 85, cysteine 88, cysteine 100, cysteine 103, cysteine 109, cysteine 112, histidine 118, and histidine 122. The region spanning 143 to 221 (SKKITARGIF…MSDLKCVQDA (79 aa)) is the MIB/HERC2 2 domain. Serine 408 is modified (phosphoserine). 9 ANK repeats span residues 430 to 460 (DLNE…DVNG), 463 to 492 (AGHT…DVEA), 496 to 525 (DGDR…DLNA), 529 to 558 (RRQT…HPSL), 562 to 591 (EGDT…DVTI), 595 to 627 (NGFN…IVDE), 631 to 661 (DGYT…NLDI), 665 to 694 (NQQT…KLDI), and 698 to 729 (DGDT…KVDA). RING-type zinc fingers lie at residues 819–854 (CMVC…LICK) and 866–901 (CVVC…VQCR). Residues 935 to 962 (QKDKDNTNVNADVQKLQQQLQDIKEQTM) are a coiled coil. An RING-type 3 zinc finger spans residues 963-996 (CPVCLDRLKNMIFLCGHGTCQLCGDRMSECPICR).

As to quaternary structure, interacts with CEP131 and PCM1. Ubiquitinated; possibly via autoubiquitination. Ubiquitinated; this modification is inhibited in response to cellular stress, such as ultraviolet light (UV) radiation or heat shock. As to expression, widely expressed at low level. Expressed at higher level in spinal cord, ovary, whole brain, and all specific brain regions examined.

The protein localises to the cytoplasm. The protein resides in the cytoskeleton. It is found in the microtubule organizing center. Its subcellular location is the centrosome. It localises to the centriolar satellite. The protein localises to the cell membrane. It carries out the reaction S-ubiquitinyl-[E2 ubiquitin-conjugating enzyme]-L-cysteine + [acceptor protein]-L-lysine = [E2 ubiquitin-conjugating enzyme]-L-cysteine + N(6)-ubiquitinyl-[acceptor protein]-L-lysine.. Its pathway is protein modification; protein ubiquitination. In terms of biological role, E3 ubiquitin-protein ligase that mediates ubiquitination of Delta receptors, which act as ligands of Notch proteins. Positively regulates the Delta-mediated Notch signaling by ubiquitinating the intracellular domain of Delta, leading to endocytosis of Delta receptors. Probably mediates ubiquitination and subsequent proteasomal degradation of DAPK1, thereby antagonizing anti-apoptotic effects of DAPK1 to promote TNF-induced apoptosis. Involved in ubiquitination of centriolar satellite CEP131, CEP290 and PCM1 proteins and hence inhibits primary cilium formation in proliferating cells. Mediates 'Lys-63'-linked polyubiquitination of TBK1, which probably participates in kinase activation. (Microbial infection) During adenovirus infection, mediates ubiquitination of Core-capsid bridging protein. This allows viral genome delivery into nucleus for infection. This is E3 ubiquitin-protein ligase MIB1 (MIB1) from Homo sapiens (Human).